The chain runs to 111 residues: MICOS complex subunit MIC13 (111 aa).

Residues 8–26 (VVKFATKVTIAGGALYVAY) form a helical membrane-spanning segment.

Belongs to the MICOS complex subunit Mic13 family. Component of the mitochondrial contact site and cristae organizing system (MICOS) complex.

Its subcellular location is the mitochondrion inner membrane. Functionally, component of the MICOS complex, a large protein complex of the mitochondrial inner membrane that plays crucial roles in the maintenance of crista junctions, inner membrane architecture, and formation of contact sites to the outer membrane. Constituent of mature MICOS complex, it is required for the formation of cristae junction (CJ) and maintenance of cristae morphology. Required for the incorporation of MIC10 into the MICOS complex. The polypeptide is MICOS complex subunit MIC13 (Danio rerio (Zebrafish)).